The following is a 298-amino-acid chain: MNNLQTQFPHIAIKLNEPLSKYTYTKTGGEADVFVMPKTIEEAQEVVAYCHQNKIPLTILGNGSNLIIKDGGIRGVILHLDLLQTIERNNTQIIAMSGAKLIDTAKFALDESLSGLEFACGIPGSIGGALHMNAGAYGGEISDVLEAATVLTQTGELKKLKRSELKAAYRFSTIAEKNYIVLDATFSLALEEKNLIQAKMDELTAAREAKQPLEYPSCGSVFKRPPGHFAGKLIQDSGLQGHIIGGAQVSLKHAGFIVNIGGATATDYMNLIAYVQKTVREKFDVELETEVKIIGEDK.

In terms of domain architecture, FAD-binding PCMH-type spans 27 to 191; sequence TGGEADVFVM…LDATFSLALE (165 aa). Arg170 is an active-site residue. Ser220 (proton donor) is an active-site residue. The active site involves Glu290.

It belongs to the MurB family. Requires FAD as cofactor.

The protein localises to the cytoplasm. It carries out the reaction UDP-N-acetyl-alpha-D-muramate + NADP(+) = UDP-N-acetyl-3-O-(1-carboxyvinyl)-alpha-D-glucosamine + NADPH + H(+). It functions in the pathway cell wall biogenesis; peptidoglycan biosynthesis. Functionally, cell wall formation. This is UDP-N-acetylenolpyruvoylglucosamine reductase from Listeria monocytogenes serotype 4a (strain HCC23).